A 185-amino-acid chain; its full sequence is Elongation factor P (185 aa).

It belongs to the elongation factor P family.

It localises to the cytoplasm. Its pathway is protein biosynthesis; polypeptide chain elongation. In terms of biological role, involved in peptide bond synthesis. Stimulates efficient translation and peptide-bond synthesis on native or reconstituted 70S ribosomes in vitro. Probably functions indirectly by altering the affinity of the ribosome for aminoacyl-tRNA, thus increasing their reactivity as acceptors for peptidyl transferase. The chain is Elongation factor P from Geobacillus thermodenitrificans (strain NG80-2).